Here is a 496-residue protein sequence, read N- to C-terminus: Acyltransferase clz6 (496 aa).

Histidine 163 serves as the catalytic Proton acceptor.

The protein belongs to the plant acyltransferase family. As to quaternary structure, monomer.

The protein operates within secondary metabolite biosynthesis. Its function is as follows. Acyltransferase; part of the gene cluster that mediates the biosynthesis of squalestatin S1 (SQS1, also known as zaragozic acid A), a heavily oxidized fungal polyketide that offers potent cholesterol lowering activity by targeting squalene synthase (SS). SQS1 is composed of a 2,8-dioxobicyclic[3.2.1]octane-3,4,5-tricarboxyclic acid core that is connected to two lipophilic polyketide arms. These initial steps feature the priming of an unusual benzoic acid starter unit onto the highly reducing polyketide synthase clz14, followed by oxaloacetate extension and product release to generate a tricarboxylic acid containing product. The phenylalanine ammonia lyase (PAL) clz10 and the acyl-CoA ligase clz12 are involved in transforming phenylalanine into benzoyl-CoA. The citrate synthase-like protein clz17 is involved in connecting the C-alpha-carbons of the hexaketide chain and oxaloacetate to afford the tricarboxylic acid unit. The potential hydrolytic enzymes, clz11 and clz13, are in close proximity to pks2 and may participate in product release. On the other side, the tetraketide arm is synthesized by a the squalestatin tetraketide synthase clz2 and enzymatically esterified to the core in the last biosynthetic step, by the acetyltransferase clz6. The biosynthesis of the tetraketide must involve 3 rounds of chain extension. After the first and second rounds methyl-transfer occurs, and in all rounds of extension the ketoreductase and dehydratase are active. The enoyl reductase and C-MeT of clz2 are not active in the final round of extension. The acetyltransferase clz6 appears to have a broad substrate selectivity for its acyl CoA substrate, allowing the in vitro synthesis of novel squalestatins. The biosynthesis of SQS1 requires several oxidative steps likely performed by oxidoreductases clz3, clz15 and clz16. Finally, in support of the identification of the cluster as being responsible for SQS1 production, the cluster contains a gene encoding a putative squalene synthase (SS) clz20, suggesting a likely mechanism for self-resistance. In Cochliobolus lunatus (Filamentous fungus), this protein is Acyltransferase clz6.